The following is a 201-amino-acid chain: FMN-dependent NADH:quinone oxidoreductase (201 aa).

Residues Ser10, 16-18, 96-99, and 140-143 each bind FMN; these read SQS, MYNF, and SRGG.

The protein belongs to the azoreductase type 1 family. As to quaternary structure, homodimer. Requires FMN as cofactor.

It carries out the reaction 2 a quinone + NADH + H(+) = 2 a 1,4-benzosemiquinone + NAD(+). The enzyme catalyses N,N-dimethyl-1,4-phenylenediamine + anthranilate + 2 NAD(+) = 2-(4-dimethylaminophenyl)diazenylbenzoate + 2 NADH + 2 H(+). Its function is as follows. Quinone reductase that provides resistance to thiol-specific stress caused by electrophilic quinones. Functionally, also exhibits azoreductase activity. Catalyzes the reductive cleavage of the azo bond in aromatic azo compounds to the corresponding amines. The polypeptide is FMN-dependent NADH:quinone oxidoreductase (Citrobacter koseri (strain ATCC BAA-895 / CDC 4225-83 / SGSC4696)).